Consider the following 443-residue polypeptide: Histidinol dehydrogenase (443 aa).

3 residues coordinate NAD(+): tyrosine 127, glutamine 185, and asparagine 208. Substrate-binding residues include serine 234, glutamine 256, and histidine 259. Positions 256 and 259 each coordinate Zn(2+). Active-site proton acceptor residues include glutamate 323 and histidine 324. Residues histidine 324, aspartate 357, glutamate 411, and histidine 416 each contribute to the substrate site. Aspartate 357 contacts Zn(2+). Histidine 416 serves as a coordination point for Zn(2+).

This sequence belongs to the histidinol dehydrogenase family. Requires Zn(2+) as cofactor.

The catalysed reaction is L-histidinol + 2 NAD(+) + H2O = L-histidine + 2 NADH + 3 H(+). It functions in the pathway amino-acid biosynthesis; L-histidine biosynthesis; L-histidine from 5-phospho-alpha-D-ribose 1-diphosphate: step 9/9. Its function is as follows. Catalyzes the sequential NAD-dependent oxidations of L-histidinol to L-histidinaldehyde and then to L-histidine. The chain is Histidinol dehydrogenase from Photobacterium profundum (strain SS9).